The primary structure comprises 190 residues: Guanylate kinase (190 aa).

In terms of domain architecture, Guanylate kinase-like spans 3–185 (NYIFIISAPS…SLEQLCKYFE (183 aa)). An ATP-binding site is contributed by 10–17 (APSGAGKS).

The protein belongs to the guanylate kinase family.

The protein localises to the cytoplasm. It catalyses the reaction GMP + ATP = GDP + ADP. Essential for recycling GMP and indirectly, cGMP. This is Guanylate kinase from Francisella tularensis subsp. holarctica (strain OSU18).